The following is a 264-amino-acid chain: Tryptophan synthase alpha chain (264 aa).

Catalysis depends on proton acceptor residues Glu49 and Asp60.

Belongs to the TrpA family. As to quaternary structure, tetramer of two alpha and two beta chains.

It carries out the reaction (1S,2R)-1-C-(indol-3-yl)glycerol 3-phosphate + L-serine = D-glyceraldehyde 3-phosphate + L-tryptophan + H2O. It participates in amino-acid biosynthesis; L-tryptophan biosynthesis; L-tryptophan from chorismate: step 5/5. Its function is as follows. The alpha subunit is responsible for the aldol cleavage of indoleglycerol phosphate to indole and glyceraldehyde 3-phosphate. In Picosynechococcus sp. (strain ATCC 27264 / PCC 7002 / PR-6) (Agmenellum quadruplicatum), this protein is Tryptophan synthase alpha chain.